The primary structure comprises 568 residues: Phosphoprotein (568 aa).

The disordered stretch occupies residues 1–25; sequence MDQDAFFSERDPEAEGETPRKQESL. Residues 7 to 24 are compositionally biased toward basic and acidic residues; the sequence is FSERDPEAEGETPRKQES. The interval 33-41 is N0 binding; the sequence is DVVLSYKPT. A disordered region spans residues 55–322; the sequence is DNSKENKPSC…TTANEEGTSN (268 aa). 4 stretches are compositionally biased toward basic and acidic residues: residues 56-105, 132-144, 151-167, and 175-190; these read NSKE…HARI, RNTR…PNER, PTDE…KREE, and EEVR…REGR. The span at 191-216 shows a compositional bias: polar residues; the sequence is TNNNGRSMETSSTHSTRITDVITNPS. The segment covering 239 to 265 has biased composition (basic and acidic residues); it reads TRSERTQNSELHKSTSEDSSNLEDHNT. Residues 294–304 show a composition bias toward low complexity; that stretch reads YTTNNANNNTK. The segment at 344-411 is multimerization; that stretch reads FELSRSASHV…SSRDLHKRFS (68 aa). A coiled-coil region spans residues 387-416; that stretch reads EENRTLLKQIQEEIDSSRDLHKRFSEYQKE. A l protein binding region spans residues 412–445; the sequence is EYQKEQNSLMMANLSTLHIITDRGGKTGDPSDTT. 2 disordered regions span residues 434–455 and 494–513; these read RGGK…TKGK and VLEE…LIPS. Over residues 441-450 the composition is skewed to polar residues; it reads PSDTTRSPSV. An interaction with the nucleocapsid (N-RNA) region spans residues 479–568; sequence DLIREDELRD…FEEDIDSLTN (90 aa).

The protein belongs to the respirovirus P protein family. As to quaternary structure, homotetramer. Interacts (via multimerization domain) with polymerase L; this interaction forms the polymerase complex. Interacts (via N-terminus) with N0; this interaction allows P to chaperon N0 before encapsidation and form the N-P complex. Interacts (via C-terminus) with N-RNA template; this interaction positions the polymerase on the template.

Its function is as follows. Essential cofactor of the RNA polymerase L that plays a central role in the transcription and replication by forming the polymerase complex with RNA polymerase L and recruiting L to the genomic N-RNA template for RNA synthesis. Also plays a central role in the encapsidation of nascent RNA chains by forming the encapsidation complex with the nucleocapsid protein N (N-P complex). Acts as a chaperone for newly synthesized free N protein, so-called N0, allowing encapsidation of nascent RNA chains during replication. The nucleoprotein protein N prevents excessive phosphorylation of P, which leads to down-regulation of viral transcription/ replication. Participates, together with N, in the formation of viral factories (viroplasms), which are large inclusions in the host cytoplasm where replication takes place. Recruits host PI4KB and remodel the host endoplasmic reticulum membrane to form viral replication factories. This chain is Phosphoprotein (P/C), found in Human parainfluenza 1 virus (strain CI-5/73) (HPIV-1).